Consider the following 146-residue polypeptide: DNA-directed RNA polymerase subunit beta (146 aa).

Belongs to the RNA polymerase beta chain family. In terms of assembly, the RNAP catalytic core consists of 2 alpha, 1 beta, 1 beta' and 1 omega subunit. When a sigma factor is associated with the core the holoenzyme is formed, which can initiate transcription.

It carries out the reaction RNA(n) + a ribonucleoside 5'-triphosphate = RNA(n+1) + diphosphate. In terms of biological role, DNA-dependent RNA polymerase catalyzes the transcription of DNA into RNA using the four ribonucleoside triphosphates as substrates. The chain is DNA-directed RNA polymerase subunit beta (rpoB) from Liberibacter africanus (Citrus greening disease).